We begin with the raw amino-acid sequence, 738 residues long: Protein Aster-B (738 aa).

Residues 1–81 (MKGFKLSCTA…SGGKNSKKSQ (81 aa)) are disordered. Residues 8-19 (CTASNSNRSTPA) show a composition bias toward polar residues. Residues Ser28 and Ser30 each carry the phosphoserine modification. The segment covering 41 to 51 (MVEKGSDHSSD) has biased composition (basic and acidic residues). Low complexity predominate over residues 59 to 70 (QGVQRSCSSQSG). A GRAM domain is found at 96–163 (EDFRKLFKQL…KDICSMTKEK (68 aa)). The segment at 254–301 (EENEVNDSSSKSSIETKPDASPQLPKKSITNSTLTSTGSSEAPVSFDG) is disordered. Residues 259 to 268 (NDSSSKSSIE) are compositionally biased toward polar residues. At Ser274 the chain carries Phosphoserine. The span at 281-295 (SITNSTLTSTGSSEA) shows a compositional bias: polar residues. Positions 372–543 (SGRQYVNEVF…ELAKTESTYL (172 aa)) constitute a VASt domain. At Tyr389 the chain carries Phosphotyrosine. The interval 544-566 (AEMHRQSPKEKASKTTTVRRRKR) is disordered. Positions 545–556 (EMHRQSPKEKAS) are enriched in basic and acidic residues. Ser550 and Ser581 each carry phosphoserine. Residues Thr584, Thr585, and Thr587 each carry the phosphothreonine modification. Residues 623-643 (LLLVISCVICFSLVLLVILNM) traverse the membrane as a helical segment.

The protein localises to the endoplasmic reticulum membrane. Its subcellular location is the cell membrane. Functionally, cholesterol transporter that mediates non-vesicular transport of cholesterol from the plasma membrane (PM) to the endoplasmic reticulum (ER). Contains unique domains for binding cholesterol and the PM, thereby serving as a molecular bridge for the transfer of cholesterol from the PM to the ER. Plays a crucial role in cholesterol homeostasis in the adrenal gland and has the unique ability to localize to the PM based on the level of membrane cholesterol. In lipid-poor conditions localizes to the ER membrane and in response to excess cholesterol in the PM is recruited to the endoplasmic reticulum-plasma membrane contact sites (EPCS) which is mediated by the GRAM domain. At the EPCS, the sterol-binding VASt/ASTER domain binds to the cholesterol in the PM and facilitates its transfer from the PM to ER. The polypeptide is Protein Aster-B (GRAMD1B) (Homo sapiens (Human)).